A 1035-amino-acid polypeptide reads, in one-letter code: MECADYFIGSGRRCSPSTSTSTSREAWRPEKQWRKATNVIRGCHRLLRLGVLSAAAGIMRRNPSYVEIKVHDEGELDVSSGGDGEAPVAFTVAADDESFKGLVKNKREDCFRLLGGGAGVAAVLASGAERGIRGDDADVARRKKAFGSNTYPKPKPKGFFRHVWDALADVFLIVLLVCAAVSLAFGIKEHGIKDGWYDGVSIFLAVFLVAAVSAVSNHSQGKRFDKLARESENIMVSVVRAARRQEVSIFDVVVGDVVVLKIGDVVPADGVFLDGHALQVDESSMTGEPHPVEVDAVKSPFLASGVKVVDGYGKMVVTAVGTDTAWGEMMRTITRENTDPTPLQERLEGLTSSIGKVGIAVAVLVFAVLTARHFTGSTRDEQGNALFDKRNVTFNAVFSGLVGIFQQAVTIIVVAIPEGLPLAVTLTLAFSMKRMVRENALVRRLSACETMGSVTAICTDKTGTLTLNQMKVTEFWVGADRPRSAAAVNGGVVRLLCQGAGLNTTGSVYKPDNVSPPEITGSPTEKALLSWAVEELPMDADALKRKCKVVRVEAFNSDKKRSGVMLRDAATGAVTAHWKGAAEMVLARCTVYVGADGAARELGVEQRRKLEQVINDMAAASLRCIAFAYKQVVDGGDSDNAKIDDEGLTLLGFVGLKDPCRPEVKSAIEACTKAGIAVKMVTGDNVLTARAIAKECGIISGNDDDAAGVVIEGHEFRAMSEQEQLAIVDNIRVMARSLPLDKLVLVQRLKQKGHVVAVTGDGTNDAPALKEADVGLSMGVQGTEVAKESSDIVILNDNFDTVVTATRWGRCVYNNIQKFIQFQLTVNVAALVINFVSAVTTGRMPLTTVQLLWVNLIMDTMGALALATDTPTAGLMRRPPIGRAAPLISNAMWRNLAAQAAYQVAVLLALQYRGFGGAGAGERANGTMIFNAFVLCQVFNEFNAREIERRNVFAGVHRNRMFLGIVAVTVALQVVMVELLTKFAGTERLGWGQWGACVGIAAVSWPIGWAVKCIPVPERPFHEIITARRRRRRST.

Topologically, residues 1–166 are cytoplasmic; sequence MECADYFIGS…KGFFRHVWDA (166 aa). The chain crosses the membrane as a helical span at residues 167–187; that stretch reads LADVFLIVLLVCAAVSLAFGI. At 188-194 the chain is on the extracellular side; it reads KEHGIKD. The chain crosses the membrane as a helical span at residues 195-215; that stretch reads GWYDGVSIFLAVFLVAAVSAV. Over 216-348 the chain is Cytoplasmic; that stretch reads SNHSQGKRFD…DPTPLQERLE (133 aa). Residues 349 to 369 traverse the membrane as a helical segment; sequence GLTSSIGKVGIAVAVLVFAVL. Residues 370–395 are Extracellular-facing; that stretch reads TARHFTGSTRDEQGNALFDKRNVTFN. An N-linked (GlcNAc...) asparagine glycan is attached at asparagine 391. A helical transmembrane segment spans residues 396-416; the sequence is AVFSGLVGIFQQAVTIIVVAI. Residues 417–818 lie on the Cytoplasmic side of the membrane; it reads PEGLPLAVTL…GRCVYNNIQK (402 aa). Catalysis depends on aspartate 460, which acts as the 4-aspartylphosphate intermediate. Mg(2+)-binding residues include aspartate 761 and aspartate 765. Residues 819 to 839 traverse the membrane as a helical segment; sequence FIQFQLTVNVAALVINFVSAV. At 840 to 845 the chain is on the extracellular side; that stretch reads TTGRMP. Residues 846–866 form a helical membrane-spanning segment; it reads LTTVQLLWVNLIMDTMGALAL. Topologically, residues 867–887 are cytoplasmic; the sequence is ATDTPTAGLMRRPPIGRAAPL. A helical membrane pass occupies residues 888 to 910; that stretch reads ISNAMWRNLAAQAAYQVAVLLAL. The Extracellular portion of the chain corresponds to 911–919; the sequence is QYRGFGGAG. The helical transmembrane segment at 920–940 threads the bilayer; sequence AGERANGTMIFNAFVLCQVFN. Residues 941–960 lie on the Cytoplasmic side of the membrane; it reads EFNAREIERRNVFAGVHRNR. A helical transmembrane segment spans residues 961–981; that stretch reads MFLGIVAVTVALQVVMVELLT. At 982–990 the chain is on the extracellular side; it reads KFAGTERLG. The helical transmembrane segment at 991-1011 threads the bilayer; it reads WGQWGACVGIAAVSWPIGWAV. The Cytoplasmic segment spans residues 1012–1035; that stretch reads KCIPVPERPFHEIITARRRRRRST.

It belongs to the cation transport ATPase (P-type) (TC 3.A.3) family. Type IIB subfamily.

It localises to the golgi apparatus membrane. It carries out the reaction Ca(2+)(in) + ATP + H2O = Ca(2+)(out) + ADP + phosphate + H(+). Activated by calmodulin. Its function is as follows. This magnesium-dependent enzyme catalyzes the hydrolysis of ATP coupled with the translocation of calcium from the cytosol out of the cell, into the endoplasmic reticulum, or into organelles. Involved in salt stress tolerance. The protein is Calcium-transporting ATPase 7, plasma membrane-type of Oryza sativa subsp. japonica (Rice).